The sequence spans 671 residues: MSELEEDFAKILMLKEERIKELEKRLSEKEEEIQELKRKLHKCQSVLPVPSTHIGPRTTRAQGISAEPQTYRSFHDLRQAFRKFTKSERSKDLIKEAILDNDFMKNLELSQIQEIVDCMYPVEYGKDSCIIKEGDVGSLVYVMEDGKVEVTKEGVKLCTMGPGKVFGELAILYNCTRTATVKTLVNVKLWAIDRQCFQTIMMRTGLIKHTEYMEFLKSVPTFQSLPEEILSKLADVLEETHYENGEYIIRQGARGDTFFIISKGKVNVTREDSPNEDPVFLRTLGKGDWFGEKALQGEDVRTANVIAAEAVTCLVIDRDSFKHLIGGLDDVSNKAYEDAEAKAKYEAEAAFFANLKLSDFNIIDTLGVGGFGRVELVQLKSEESKTFAMKILKKRHIVDTRQQEHIRSEKQIMQGAHSDFIVRLYRTFKDSKYLYMLMEACLGGELWTILRDRGSFEDSTTRFYTACVVEAFAYLHSKGIIYRDLKPENLILDHRGYAKLVDFGFAKKIGFGKKTWTFCGTPEYVAPEIILNKGHDISADYWSLGILMYELLTGSPPFSGPDPMKTYNIILRGIDMIEFPKKIAKNAANLIKKLCRDNPSERLGNLKNGVKDIQKHKWFEGFNWEGLRKGTLTPPIIPSVASPTDTSNFDSFPEDNDEPPPDDNSGWDIDF.

Position 2 is an N-acetylserine (serine 2). Positions 2–59 form a coiled coil; sequence SELEEDFAKILMLKEERIKELEKRLSEKEEEIQELKRKLHKCQSVLPVPSTHIGPRTT. Residues 2–102 are required for dimerization; sequence SELEEDFAKI…LIKEAILDND (101 aa). Positions 9–44 are leucine-zipper; the sequence is AKILMLKEERIKELEKRLSEKEEEIQELKRKLHKCQ. The segment at 50–75 is autoinhibitory domain; that stretch reads PSTHIGPRTTRAQGISAEPQTYRSFH. The residue at position 59 (threonine 59) is a Phosphothreonine; by autocatalysis. The segment at 103-220 is cGMP-binding, high affinity; sequence FMKNLELSQI…EYMEFLKSVP (118 aa). 3',5'-cyclic AMP is bound by residues 167–170 and 177–178; these read GELA and RT. 3',5'-cyclic GMP contacts are provided by residues 167–170, 177–178, arginine 282, 291–294, 301–302, and tyrosine 336; these read GELA, RT, and GEKA. Residues 221–341 form a cGMP-binding, low affinity region; sequence TFQSLPEEIL…SNKAYEDAEA (121 aa). A Protein kinase domain is found at 360–619; the sequence is FNIIDTLGVG…VKDIQKHKWF (260 aa). Residues 366–374 and lysine 390 contribute to the ATP site; that span reads LGVGGFGRV. Aspartate 484 functions as the Proton acceptor in the catalytic mechanism. Position 515 is a phosphothreonine (threonine 515). Residues 620–671 enclose the AGC-kinase C-terminal domain; it reads EGFNWEGLRKGTLTPPIIPSVASPTDTSNFDSFPEDNDEPPPDDNSGWDIDF. Positions 635–671 are disordered; that stretch reads PIIPSVASPTDTSNFDSFPEDNDEPPPDDNSGWDIDF. Positions 652–661 are enriched in acidic residues; the sequence is FPEDNDEPPP.

This sequence belongs to the protein kinase superfamily. AGC Ser/Thr protein kinase family. cGMP subfamily. In terms of assembly, isoform alpha: parallel homodimer or heterodimer and also heterotetramer. Interacts directly with PPP1R12A. Non-covalent dimer of dimer of PRKG1-PRKG1 and PPP1R12A-PPP1R12A. This interaction targets PRKG1 to stress fibers to mediate smooth muscle cell relaxation and vasodilation in responses to rises in cGMP. Isoform beta: antiparallel homodimer. Part of cGMP kinase signaling complex at least composed of ACTA2/alpha-actin, CNN1/calponin H1, PLN/phospholamban, PRKG1 and ITPR1. Interacts with IRAG1. Forms a stable complex with ITPR1, IRAG1, and isoform beta of PRKG1. Interacts with TRPC7 (via ankyrin repeat domain). Isoform alpha interacts with RGS2. Interacts with GTF2I. Post-translationally, autophosphorylation increases kinase activity. 65 kDa monomer is produced by proteolytic cleavage. High concentrations are detected in various smooth muscle: lung, rumen, trachea, aorta, uterus and stomach. Isoform alpha is expressed predominantly in heart, cerebellum and lung, whereas the beta isoform is expressed in high concentrations in trachea, aorta, stomach and uterus.

The protein resides in the cytoplasm. The enzyme catalyses L-seryl-[protein] + ATP = O-phospho-L-seryl-[protein] + ADP + H(+). It catalyses the reaction L-threonyl-[protein] + ATP = O-phospho-L-threonyl-[protein] + ADP + H(+). With respect to regulation, in the absence of cGMP, PRKG1 activity is suppressed by autoinhibitory contacts. Its function is as follows. Serine/threonine protein kinase that acts as a key mediator of the nitric oxide (NO)/cGMP signaling pathway. GMP binding activates PRKG1, which phosphorylates serines and threonines on many cellular proteins. Numerous protein targets for PRKG1 phosphorylation are implicated in modulating cellular calcium, but the contribution of each of these targets may vary substantially among cell types. Proteins that are phosphorylated by PRKG1 regulate platelet activation and adhesion, smooth muscle contraction, cardiac function, gene expression, feedback of the NO-signaling pathway, and other processes involved in several aspects of the CNS like axon guidance, hippocampal and cerebellar learning, circadian rhythm and nociception. Smooth muscle relaxation is mediated through lowering of intracellular free calcium, by desensitization of contractile proteins to calcium, and by decrease in the contractile state of smooth muscle or in platelet activation. Regulates intracellular calcium levels via several pathways: phosphorylates IRAG1 and inhibits IP3-induced Ca(2+) release from intracellular stores, phosphorylation of KCNMA1 (BKCa) channels decreases intracellular Ca(2+) levels, which leads to increased opening of this channel. PRKG1 phosphorylates the canonical transient receptor potential channel (TRPC) family which inactivates the associated inward calcium current. Another mode of action of NO/cGMP/PKGI signaling involves PKGI-mediated inactivation of the Ras homolog gene family member A (RhoA). Phosphorylation of RHOA by PRKG1 blocks the action of this protein in myriad processes: regulation of RHOA translocation; decreasing contraction; controlling vesicle trafficking, reduction of myosin light chain phosphorylation resulting in vasorelaxation. Activation of PRKG1 by NO signaling also alters gene expression in a number of tissues. In smooth muscle cells, increased cGMP and PRKG1 activity influence expression of smooth muscle-specific contractile proteins, levels of proteins in the NO/cGMP signaling pathway, down-regulation of the matrix proteins osteopontin and thrombospondin-1 to limit smooth muscle cell migration and phenotype. Regulates vasodilator-stimulated phosphoprotein (VASP) functions in platelets and smooth muscle. This is cGMP-dependent protein kinase 1 (PRKG1) from Bos taurus (Bovine).